We begin with the raw amino-acid sequence, 103 residues long: Small ribosomal subunit protein uS10 (103 aa).

Belongs to the universal ribosomal protein uS10 family. As to quaternary structure, part of the 30S ribosomal subunit.

Its function is as follows. Involved in the binding of tRNA to the ribosomes. This chain is Small ribosomal subunit protein uS10, found in Xylella fastidiosa (strain M12).